The chain runs to 360 residues: G-protein coupled receptor 15 (360 aa).

At 1 to 33 the chain is on the extracellular side; sequence MEPATALLIVDYYDYTSPDPPFLETPSHLSYTS. Residues 34–54 traverse the membrane as a helical segment; that stretch reads VFLPIFYTVVFLTGVVGNFIL. The Cytoplasmic segment spans residues 55 to 69; sequence MIALHFKRGNRRLID. The chain crosses the membrane as a helical span at residues 70-90; it reads IFIINLAASDFIFLVTVPLWM. Residues 91-120 are Extracellular-facing; that stretch reads DKEASLGLWRTGSFLCKGSSYVISVNMHCS. The helical transmembrane segment at 121–141 threads the bilayer; the sequence is VFLLTCMSMDRYLAIMHPALA. Topologically, residues 142-149 are cytoplasmic; sequence KRLRRRSS. The helical transmembrane segment at 150–170 threads the bilayer; sequence AYAVCAVVWIISCVLGLPTLL. The Extracellular portion of the chain corresponds to 171-192; it reads SRELTHIEGKPYCAEKKPTSLK. Residues 193–213 form a helical membrane-spanning segment; the sequence is LMWGLVALITTFFVPLLSIVT. At 214 to 239 the chain is on the cytoplasmic side; that stretch reads CYCCITRRLCAHYQQSGKHNKKLKKS. A helical transmembrane segment spans residues 240 to 260; sequence IKIVIIAVAAFTVSWVPFNTF. Residues 261-284 lie on the Extracellular side of the membrane; it reads KLLAIVSGFQPEGLFHSEALQLAM. The helical transmembrane segment at 285 to 305 threads the bilayer; sequence NVTGPLAFASSCVNPLIYYVF. Over 306 to 360 the chain is Cytoplasmic; that stretch reads DSYIRRAIVRCLCPCLKTHNFGSSTETSDSHLTKALSNFIHAEDFIRRRKRSVSL. At S359 the chain carries Phosphoserine.

This sequence belongs to the G-protein coupled receptor 1 family. In terms of assembly, interacts with adapter YWHAE; this interaction promotes ER-to-Golgi transport of GPR15. In terms of processing, phosphorylation is necessary for YWHAE binding and efficient surface expression. Post-translationally, O-glycosylated. Sialylated O-glycans in the N-terminal tail inhibits binding of GPR15LG. Sulfation is required for efficient binding of GPR15LG. As to expression, highly expressed in gut tissues and lymphoid organs, largely restricted to TCRbeta+ cells. Expressed in fetal thymic dendritic epidermal T-cell precursors.

It is found in the cell membrane. Its function is as follows. G protein-coupled receptor that plays an important role in immune homeostasis. Acts via its natural ligand GPR15LG, a chemokine-like polypeptide strongly expressed in gastrointestinal tissues. GPR15-GPR15LG signaling axis regulates intestinal homeostasis and inflammation through the migration of immune cells. Controls thereby the specific homing of T-cells, particularly FOXP3+ regulatory T-cells (Tregs), to the large intestine lamina propria. Also required for skin localization of thymus-derived dendritic epidermal T-cells. Plays an important role in mediating cytoprotective function as well as angiogenesis of thrombomodulin. Mechanistically, preferentially signals through the Gi/o pathway to inhibit adenylate cyclase activity and activate a phosphatidylinositol-calcium second messenger system that regulates the release of Ca(2+) ions from intracellular stores. The sequence is that of G-protein coupled receptor 15 (Gpr15) from Mus musculus (Mouse).